A 312-amino-acid polypeptide reads, in one-letter code: Pantothenate kinase (312 aa).

Glycine 97–serine 104 contacts ATP.

It belongs to the prokaryotic pantothenate kinase family.

Its subcellular location is the cytoplasm. It carries out the reaction (R)-pantothenate + ATP = (R)-4'-phosphopantothenate + ADP + H(+). It participates in cofactor biosynthesis; coenzyme A biosynthesis; CoA from (R)-pantothenate: step 1/5. The sequence is that of Pantothenate kinase from Mycolicibacterium gilvum (strain PYR-GCK) (Mycobacterium gilvum (strain PYR-GCK)).